Here is a 129-residue protein sequence, read N- to C-terminus: Small ribosomal subunit protein uS11 (129 aa).

It belongs to the universal ribosomal protein uS11 family. In terms of assembly, part of the 30S ribosomal subunit. Interacts with proteins S7 and S18. Binds to IF-3.

Its function is as follows. Located on the platform of the 30S subunit, it bridges several disparate RNA helices of the 16S rRNA. Forms part of the Shine-Dalgarno cleft in the 70S ribosome. This chain is Small ribosomal subunit protein uS11, found in Rhodopseudomonas palustris (strain BisB5).